The primary structure comprises 412 residues: Poly-beta-1,6-N-acetyl-D-glucosamine synthase (412 aa).

A run of 4 helical transmembrane segments spans residues 6-28, 290-312, 332-354, and 366-388; these read FLLFYPVFMSIYWIVGSIYFYFT, LYILMFEQIISILWVYIVLLYLG, IFLLSSFTMTFINVIQFTVALFI, and LIFVSWYPTVYWIINAAVVLVAF.

It belongs to the glycosyltransferase 2 family.

The protein resides in the cell membrane. In terms of biological role, N-acetylglucosaminyltransferase that catalyzes the polymerization of single monomer units of UDP-N-acetylglucosamine to produce the linear homomer poly-beta-1,6-N-acetyl-D-glucosamine (PNAG, also referred to as PIA), a biofilm adhesin polysaccharide. Requires IcaD for full activity. This chain is Poly-beta-1,6-N-acetyl-D-glucosamine synthase (icaA), found in Staphylococcus aureus (strain MSSA476).